Consider the following 288-residue polypeptide: 2-methoxy-6-polyprenyl-1,4-benzoquinol methylase, mitochondrial (288 aa).

The transit peptide at 1–27 directs the protein to the mitochondrion; it reads MALRSVSRRLGSRILNQRSFVASLHSH. S-adenosyl-L-methionine is bound by residues T94, D130, and 160–161; that span reads DA.

The protein belongs to the class I-like SAM-binding methyltransferase superfamily. MenG/UbiE family. As to quaternary structure, component of a multi-subunit COQ enzyme complex.

The protein resides in the mitochondrion inner membrane. It catalyses the reaction a 2-methoxy-6-(all-trans-polyprenyl)benzene-1,4-diol + S-adenosyl-L-methionine = a 5-methoxy-2-methyl-3-(all-trans-polyprenyl)benzene-1,4-diol + S-adenosyl-L-homocysteine + H(+). The protein operates within cofactor biosynthesis; ubiquinone biosynthesis. In terms of biological role, methyltransferase required for the conversion of 2-polyprenyl-6-methoxy-1,4-benzoquinol (DDMQH2) to 2-polyprenyl-3-methyl-6-methoxy-1,4-benzoquinol (DMQH2). This Arabidopsis thaliana (Mouse-ear cress) protein is 2-methoxy-6-polyprenyl-1,4-benzoquinol methylase, mitochondrial.